The sequence spans 269 residues: Subtilisin BL (269 aa).

Gln-2 lines the Ca(2+) pocket. The Peptidase S8 domain maps to 5–268 (PWGISRVQAP…SGLVNAEAAT (264 aa)). Asp-32 serves as the catalytic Charge relay system. Asp-40 serves as a coordination point for Ca(2+). Catalysis depends on His-62, which acts as the Charge relay system. Residues Leu-73, Asn-75, Ile-77, Val-79, Ala-163, Tyr-165, and Ala-168 each coordinate Ca(2+). Residue Ser-215 is the Charge relay system of the active site.

It belongs to the peptidase S8 family. The cofactor is Ca(2+).

Its subcellular location is the secreted. The catalysed reaction is Hydrolysis of proteins with broad specificity for peptide bonds, and a preference for a large uncharged residue in P1. Hydrolyzes peptide amides.. Subtilisin is an extracellular alkaline serine protease, it catalyzes the hydrolysis of proteins and peptide amides. This Lederbergia lenta (Bacillus lentus) protein is Subtilisin BL.